The primary structure comprises 433 residues: 4-hydroxy-3-methylbut-2-en-1-yl diphosphate synthase (flavodoxin) (433 aa).

[4Fe-4S] cluster contacts are provided by Cys-320, Cys-323, Cys-366, and Glu-373.

It belongs to the IspG family. The cofactor is [4Fe-4S] cluster.

It catalyses the reaction (2E)-4-hydroxy-3-methylbut-2-enyl diphosphate + oxidized [flavodoxin] + H2O + 2 H(+) = 2-C-methyl-D-erythritol 2,4-cyclic diphosphate + reduced [flavodoxin]. It functions in the pathway isoprenoid biosynthesis; isopentenyl diphosphate biosynthesis via DXP pathway; isopentenyl diphosphate from 1-deoxy-D-xylulose 5-phosphate: step 5/6. Converts 2C-methyl-D-erythritol 2,4-cyclodiphosphate (ME-2,4cPP) into 1-hydroxy-2-methyl-2-(E)-butenyl 4-diphosphate. This is 4-hydroxy-3-methylbut-2-en-1-yl diphosphate synthase (flavodoxin) from Beijerinckia indica subsp. indica (strain ATCC 9039 / DSM 1715 / NCIMB 8712).